The sequence spans 337 residues: Quinolinate synthase (337 aa).

His-38 and Ser-59 together coordinate iminosuccinate. Cys-104 contacts [4Fe-4S] cluster. Iminosuccinate-binding positions include 130–132 (YAN) and Ser-147. Residue Cys-191 coordinates [4Fe-4S] cluster. Iminosuccinate is bound by residues 217–219 (HPE) and Thr-234. [4Fe-4S] cluster is bound at residue Cys-288.

The protein belongs to the quinolinate synthase family. Type 1 subfamily. Requires [4Fe-4S] cluster as cofactor.

Its subcellular location is the cytoplasm. It carries out the reaction iminosuccinate + dihydroxyacetone phosphate = quinolinate + phosphate + 2 H2O + H(+). It functions in the pathway cofactor biosynthesis; NAD(+) biosynthesis; quinolinate from iminoaspartate: step 1/1. Functionally, catalyzes the condensation of iminoaspartate with dihydroxyacetone phosphate to form quinolinate. This chain is Quinolinate synthase, found in Wigglesworthia glossinidia brevipalpis.